Reading from the N-terminus, the 504-residue chain is Galactan beta-1,4-galactosyltransferase GALS3 (504 aa).

A helical membrane pass occupies residues leucine 30 to serine 50. The region spanning aspartate 242–glutamate 456 is the GT92 domain.

Belongs to the glycosyltransferase 92 family. Expressed in root caps, mature leaves, top of the stems and seeds.

The protein localises to the golgi apparatus membrane. Its function is as follows. Involved in the biosynthesis of beta-1,4-galactan. Beta-1,4-galactans are abundant polysaccharides in plant cell walls and are found as side-chain of rhamnogalacturonan I, which is a major component of pectin. The sequence is that of Galactan beta-1,4-galactosyltransferase GALS3 from Arabidopsis thaliana (Mouse-ear cress).